The sequence spans 211 residues: Large ribosomal subunit protein uL3 (211 aa).

Residues 122–157 (NQKRNNFGRGPMSHGSKNHRAPGSIGAGTTPGRVYP) form a disordered region.

The protein belongs to the universal ribosomal protein uL3 family. Part of the 50S ribosomal subunit. Forms a cluster with proteins L14 and L19.

Its function is as follows. One of the primary rRNA binding proteins, it binds directly near the 3'-end of the 23S rRNA, where it nucleates assembly of the 50S subunit. In Trichormus variabilis (strain ATCC 29413 / PCC 7937) (Anabaena variabilis), this protein is Large ribosomal subunit protein uL3.